The chain runs to 326 residues: uncharacterized protein (326 aa).

Residues 15–76 (VRIEKFCLKL…IEPYLHNHSE (62 aa)) enclose the S4 RNA-binding domain. The active site involves D147.

The protein belongs to the pseudouridine synthase RluA family.

It carries out the reaction a uridine in RNA = a pseudouridine in RNA. This is an uncharacterized protein from Mycoplasma pneumoniae (strain ATCC 29342 / M129 / Subtype 1) (Mycoplasmoides pneumoniae).